The following is a 1007-amino-acid chain: Bifunctional glutamine synthetase adenylyltransferase/adenylyl-removing enzyme (1007 aa).

The segment at 1-496 (MTREQLSLTV…LHERLFYRPL (496 aa)) is adenylyl removase. The segment at 505 to 1007 (NEDARLSGEA…GPPQRPATTA (503 aa)) is adenylyl transferase.

Belongs to the GlnE family. It depends on Mg(2+) as a cofactor.

It catalyses the reaction [glutamine synthetase]-O(4)-(5'-adenylyl)-L-tyrosine + phosphate = [glutamine synthetase]-L-tyrosine + ADP. It carries out the reaction [glutamine synthetase]-L-tyrosine + ATP = [glutamine synthetase]-O(4)-(5'-adenylyl)-L-tyrosine + diphosphate. In terms of biological role, involved in the regulation of glutamine synthetase GlnA, a key enzyme in the process to assimilate ammonia. When cellular nitrogen levels are high, the C-terminal adenylyl transferase (AT) inactivates GlnA by covalent transfer of an adenylyl group from ATP to specific tyrosine residue of GlnA, thus reducing its activity. Conversely, when nitrogen levels are low, the N-terminal adenylyl removase (AR) activates GlnA by removing the adenylyl group by phosphorolysis, increasing its activity. The regulatory region of GlnE binds the signal transduction protein PII (GlnB) which indicates the nitrogen status of the cell. This Leifsonia xyli subsp. xyli (strain CTCB07) protein is Bifunctional glutamine synthetase adenylyltransferase/adenylyl-removing enzyme.